We begin with the raw amino-acid sequence, 684 residues long: Ski-like protein (684 aa).

Residues lysine 50 and lysine 70 each participate in a glycyl lysine isopeptide (Lys-Gly) (interchain with G-Cter in SUMO2) cross-link. A disordered region spans residues 420–454; that stretch reads SQSKELTKTEASKSISRQSEKAHSSGKLQKTVSYP. Serine 452 carries the post-translational modification Phosphoserine. Residues lysine 489 and lysine 527 each participate in a glycyl lysine isopeptide (Lys-Gly) (interchain with G-Cter in SUMO2) cross-link. Residues 536–684 are a coiled coil; that stretch reads RTYLKQQEKL…ILKSSKTAKE (149 aa).

Belongs to the SKI family. As to quaternary structure, interacts with CPNE4 (via VWFA domain). Interacts with SMAD2, SMAD3 and RNF111. Isoform 1 interacts with WWP1. In terms of processing, ubiquitinated by RNF111 and ARK2C, promoting proteasomal degradation, leading to enhance the BMP-Smad signaling. As to expression, isoform SNON and isoform SNOA are widely expressed. Highest expression is found in skeletal muscle, followed by placenta and lung. Lowest expression in heart, brain and pancreas. Isoform SNOI expression is restricted to skeletal muscle.

Its function is as follows. May have regulatory role in cell division or differentiation in response to extracellular signals. This is Ski-like protein (SKIL) from Homo sapiens (Human).